Reading from the N-terminus, the 376-residue chain is MLRTLRTSQLARSGFGTPSFGLRFNSVGRAFVFSQTGEPKDVIQVLEYPIEKPLENQVLLKSLGFTINPADINQLEGVYPSVPPKSVQINNEDAAIGGNEGLFQVLDPGAKSGLKKGDWVLPRKTCFGTWRSHALVEADTVVKIDNTDLTKVQATTVSVNPSTAYEMLKDLKEGDWFIQNGGNSGVGRAAIQIGHIRGLKSISVVRDRPDLEVLKKELTDLGATHVITEEEASDKLFSKQIKSWTGGKIKLALNCIGGKSATSIMRQLGAGGSIVTYGGMSKKPLTFPTGPFIFKDITAKGYWLTRWADKHPEEKAKTIENIFKFYREKKFVAPPVNISTLDFSKGNDVVLSEFLDALGKAQKGGGKKQLVQWVEY.

Residues 1–12 (MLRTLRTSQLAR) constitute a mitochondrion transit peptide. Y79 (proton donor) is an active-site residue. Residues N160, 183 to 186 (NSGV), 206 to 208 (RDR), 277 to 280 (YGGM), 302 to 304 (YWL), and K368 each bind NADP(+).

The protein belongs to the zinc-containing alcohol dehydrogenase family. Quinone oxidoreductase subfamily. In terms of assembly, homodimer.

It is found in the mitochondrion matrix. The enzyme catalyses a 2,3-saturated acyl-[ACP] + NADP(+) = a (2E)-enoyl-[ACP] + NADPH + H(+). In terms of biological role, catalyzes the NADPH-dependent reduction of trans-2-enoyl thioesters in mitochondrial fatty acid synthesis (fatty acid synthesis type II). Fatty acid chain elongation in mitochondria uses acyl carrier protein (ACP) as an acyl group carrier, but the enzyme accepts both ACP and CoA thioesters as substrates in vitro. Required for respiration and the maintenance of the mitochondrial compartment. This chain is Enoyl-[acyl-carrier-protein] reductase, mitochondrial (ETR1), found in Yarrowia lipolytica (strain CLIB 122 / E 150) (Yeast).